Reading from the N-terminus, the 306-residue chain is Aspartate carbamoyltransferase catalytic subunit (306 aa).

Positions 55 and 56 each coordinate carbamoyl phosphate. An L-aspartate-binding site is contributed by K84. 3 residues coordinate carbamoyl phosphate: R105, H133, and Q136. L-aspartate contacts are provided by R166 and R227. Positions 265 and 266 each coordinate carbamoyl phosphate.

It belongs to the aspartate/ornithine carbamoyltransferase superfamily. ATCase family. As to quaternary structure, heterododecamer (2C3:3R2) of six catalytic PyrB chains organized as two trimers (C3), and six regulatory PyrI chains organized as three dimers (R2).

It carries out the reaction carbamoyl phosphate + L-aspartate = N-carbamoyl-L-aspartate + phosphate + H(+). The protein operates within pyrimidine metabolism; UMP biosynthesis via de novo pathway; (S)-dihydroorotate from bicarbonate: step 2/3. Catalyzes the condensation of carbamoyl phosphate and aspartate to form carbamoyl aspartate and inorganic phosphate, the committed step in the de novo pyrimidine nucleotide biosynthesis pathway. The polypeptide is Aspartate carbamoyltransferase catalytic subunit (Neisseria gonorrhoeae (strain NCCP11945)).